The sequence spans 445 residues: ATP-dependent protease ATPase subunit HslU (445 aa).

Residues Val18, 60–65, Asp254, Glu319, and Arg391 each bind ATP; that span reads GVGKTE.

It belongs to the ClpX chaperone family. HslU subfamily. As to quaternary structure, a double ring-shaped homohexamer of HslV is capped on each side by a ring-shaped HslU homohexamer. The assembly of the HslU/HslV complex is dependent on binding of ATP.

It is found in the cytoplasm. Functionally, ATPase subunit of a proteasome-like degradation complex; this subunit has chaperone activity. The binding of ATP and its subsequent hydrolysis by HslU are essential for unfolding of protein substrates subsequently hydrolyzed by HslV. HslU recognizes the N-terminal part of its protein substrates and unfolds these before they are guided to HslV for hydrolysis. The chain is ATP-dependent protease ATPase subunit HslU from Alcanivorax borkumensis (strain ATCC 700651 / DSM 11573 / NCIMB 13689 / SK2).